The sequence spans 304 residues: Glycine--tRNA ligase alpha subunit (304 aa).

Belongs to the class-II aminoacyl-tRNA synthetase family. In terms of assembly, tetramer of two alpha and two beta subunits.

It is found in the cytoplasm. The enzyme catalyses tRNA(Gly) + glycine + ATP = glycyl-tRNA(Gly) + AMP + diphosphate. The sequence is that of Glycine--tRNA ligase alpha subunit from Streptococcus agalactiae serotype Ia (strain ATCC 27591 / A909 / CDC SS700).